The sequence spans 195 residues: Imidazoleglycerol-phosphate dehydratase (195 aa).

The protein belongs to the imidazoleglycerol-phosphate dehydratase family.

Its subcellular location is the cytoplasm. It carries out the reaction D-erythro-1-(imidazol-4-yl)glycerol 3-phosphate = 3-(imidazol-4-yl)-2-oxopropyl phosphate + H2O. It participates in amino-acid biosynthesis; L-histidine biosynthesis; L-histidine from 5-phospho-alpha-D-ribose 1-diphosphate: step 6/9. In Burkholderia pseudomallei (strain 1710b), this protein is Imidazoleglycerol-phosphate dehydratase.